Here is a 353-residue protein sequence, read N- to C-terminus: ATPase GET3A (353 aa).

27 to 34 is an ATP binding site; it reads KGGVGKTT. The active site involves Asp56. The ATP site is built by Glu226 and Asn253. Positions 320–353 form a coiled coil; it reads TTSRSNVEELERKVHTLRLQLKTAEEELERVKSG.

The protein belongs to the arsA ATPase family. In terms of assembly, homodimer. Interacts with GET1 and GET4.

The protein localises to the cytoplasm. It is found in the cytosol. The protein resides in the endoplasmic reticulum. The enzyme catalyses ATP + H2O = ADP + phosphate + H(+). In terms of biological role, ATPase required for the post-translational delivery of tail-anchored (TA) proteins to the endoplasmic reticulum. Recognizes and selectively binds the transmembrane domain of TA proteins in the cytosol. This complex then targets to the endoplasmic reticulum by membrane-bound receptors, where the tail-anchored protein is released for insertion. This process is regulated by ATP binding and hydrolysis. ATP binding drives the homodimer towards the closed dimer state, facilitating recognition of newly synthesized TA membrane proteins. ATP hydrolysis is required for insertion. Subsequently, the homodimer reverts towards the open dimer state, lowering its affinity for the membrane-bound receptor, and returning it to the cytosol to initiate a new round of targeting. Involved in the control of root hair growth through the regulation of syntaxin SYP123 expression. The chain is ATPase GET3A from Arabidopsis thaliana (Mouse-ear cress).